Here is a 291-residue protein sequence, read N- to C-terminus: Undecaprenyl-diphosphatase (291 aa).

A run of 8 helical transmembrane segments spans residues Met-1–Phe-21, Ser-48–Phe-68, Leu-102–Ile-122, Leu-126–Ala-146, Ile-162–Phe-182, Ser-203–Leu-223, Ile-231–Ala-251, and Phe-267–Ile-287.

The protein belongs to the UppP family.

It localises to the cell membrane. The catalysed reaction is di-trans,octa-cis-undecaprenyl diphosphate + H2O = di-trans,octa-cis-undecaprenyl phosphate + phosphate + H(+). Functionally, catalyzes the dephosphorylation of undecaprenyl diphosphate (UPP). Confers resistance to bacitracin. The polypeptide is Undecaprenyl-diphosphatase (Staphylococcus aureus (strain bovine RF122 / ET3-1)).